Consider the following 205-residue polypeptide: Thymidine kinase (205 aa).

ATP is bound by residues 9–16 (SAMNAGKT) and 88–91 (DECH). The active-site Proton acceptor is Glu89. Zn(2+) is bound by residues Cys146, Cys148, Cys183, and His186.

The protein belongs to the thymidine kinase family. As to quaternary structure, homotetramer.

It is found in the cytoplasm. It catalyses the reaction thymidine + ATP = dTMP + ADP + H(+). This is Thymidine kinase from Blochmanniella pennsylvanica (strain BPEN).